The sequence spans 324 residues: UDP-N-acetylenolpyruvoylglucosamine reductase (324 aa).

Residues 38–217 (AGGLAELMFQ…IRAEMDAVRQ (180 aa)) form the FAD-binding PCMH-type domain. Arg183 is a catalytic residue. Residue Ser232 is the Proton donor of the active site. Glu302 is a catalytic residue.

It belongs to the MurB family. The cofactor is FAD.

The protein resides in the cytoplasm. It catalyses the reaction UDP-N-acetyl-alpha-D-muramate + NADP(+) = UDP-N-acetyl-3-O-(1-carboxyvinyl)-alpha-D-glucosamine + NADPH + H(+). The protein operates within cell wall biogenesis; peptidoglycan biosynthesis. In terms of biological role, cell wall formation. In Allorhizobium ampelinum (strain ATCC BAA-846 / DSM 112012 / S4) (Agrobacterium vitis (strain S4)), this protein is UDP-N-acetylenolpyruvoylglucosamine reductase.